Reading from the N-terminus, the 544-residue chain is Inosine-5'-monophosphate dehydrogenase (544 aa).

CBS domains follow at residues 132–192 (FITD…PIKS) and 194–250 (MTTE…PYAS). NAD(+) is bound by residues 288–290 (DSS) and 338–340 (GMG). Residues Gly-340 and Gly-342 each coordinate K(+). IMP is bound at residue Ser-343. Cys-345 contacts K(+). The active-site Thioimidate intermediate is the Cys-345. IMP-binding positions include 378-380 (DGG), 401-402 (GG), and 425-429 (YRGMG). The Proton acceptor role is filled by Arg-458. An IMP-binding site is contributed by Gln-470. Residues Glu-529, Gly-530, and Gly-531 each contribute to the K(+) site.

This sequence belongs to the IMPDH/GMPR family. Homotetramer. The cofactor is K(+).

The protein localises to the cytoplasm. The enzyme catalyses IMP + NAD(+) + H2O = XMP + NADH + H(+). It functions in the pathway purine metabolism; XMP biosynthesis via de novo pathway; XMP from IMP: step 1/1. Mycophenolic acid (MPA) is a non-competitive inhibitor that prevents formation of the closed enzyme conformation by binding to the same site as the amobile flap. In contrast, mizoribine monophosphate (MZP) is a competitive inhibitor that induces the closed conformation. MPA is a potent inhibitor of mammalian IMPDHs but a poor inhibitor of the bacterial enzymes. MZP is a more potent inhibitor of bacterial IMPDH. Catalyzes the conversion of inosine 5'-phosphate (IMP) to xanthosine 5'-phosphate (XMP), the first committed and rate-limiting step in the de novo synthesis of guanine nucleotides, and therefore plays an important role in the regulation of cell growth. In Cryptococcus neoformans var. neoformans serotype D (strain JEC21 / ATCC MYA-565) (Filobasidiella neoformans), this protein is Inosine-5'-monophosphate dehydrogenase.